A 904-amino-acid chain; its full sequence is Protein translocase subunit SecA (904 aa).

ATP contacts are provided by residues Q89, 107–111 (GEGKT), and D502. Residues 872 to 892 (VESDPTTWGEPSRNDPCPCGS) are disordered. Zn(2+) is bound by residues C888, C890, C899, and H900.

This sequence belongs to the SecA family. As to quaternary structure, part of the essential protein translocation apparatus which comprises SecA, SecYEG and auxiliary proteins SecDF-YajC and YidC. Homodimer. Zn(2+) serves as cofactor.

It localises to the cell inner membrane. It is found in the cytoplasm. The catalysed reaction is ATP + H2O + cellular proteinSide 1 = ADP + phosphate + cellular proteinSide 2.. Its function is as follows. Part of the Sec protein translocase complex. Interacts with the SecYEG preprotein conducting channel. Has a central role in coupling the hydrolysis of ATP to the transfer of proteins into and across the cell membrane, serving both as a receptor for the preprotein-SecB complex and as an ATP-driven molecular motor driving the stepwise translocation of polypeptide chains across the membrane. This is Protein translocase subunit SecA from Rhodobacter capsulatus (Rhodopseudomonas capsulata).